Here is a 412-residue protein sequence, read N- to C-terminus: P-selectin glycoprotein ligand 1 (412 aa).

The first 17 residues, 1 to 17 (MPLQLLLLLILLGPGNS), serve as a signal peptide directing secretion. The propeptide occupies 18 to 41 (LQLWDTWADEAEKALGPLLARDRR). Over 18-320 (LQLWDTWADE…APDHISVKQC (303 aa)) the chain is Extracellular. A Pyrrolidone carboxylic acid modification is found at glutamine 42. A sulfotyrosine mark is found at tyrosine 46, tyrosine 48, and tyrosine 51. Positions 56-95 (ETEPPEMLRNSTDTTPLTGPGTPESTTVEPAARRSTGLDA) are disordered. A glycan (O-linked (GalNAc...) threonine) is linked at threonine 57. The N-linked (GlcNAc...) asparagine glycan is linked to asparagine 65. Residues 66–82 (STDTTPLTGPGTPESTT) show a composition bias toward low complexity. Asparagine 111 carries N-linked (GlcNAc...) asparagine glycosylation. 12 consecutive repeat copies span residues 122–131 (QTTQPAATEA), 132–141 (QTTQPVPTEA), 142–151 (QTTPLAATEA), 162–171 (QTTPLAATEA), 182–191 (QTTQPTGLEA), 192–201 (QTTAPAAMEA), 202–211 (QTTAPAAMEA), 212–221 (QTTPPAAMEA), 222–231 (QTTQTTAMEA), 232–241 (QTTAPEATEA), 242–251 (QTTQPTATEA), and 252–261 (QTTPLAAMEA). Residues 122–261 (QTTQPAATEA…QTTPLAAMEA (140 aa)) form a 12 X 10 AA tandem repeats region. Disordered stretches follow at residues 125 to 146 (QPAA…TTPL) and 166 to 252 (LAAT…TEAQ). Residue asparagine 302 is glycosylated (N-linked (GlcNAc...) asparagine). The chain crosses the membrane as a helical span at residues 321–341 (LLAILILALVATIFFVCTVVL). Residues 342-412 (AVRLSRKGHM…DDLTLHSFLP (71 aa)) are Cytoplasmic-facing. The disordered stretch occupies residues 374–412 (EGPSATANGGLSKAKSPGLTPEPREDREGDDLTLHSFLP). Basic and acidic residues predominate over residues 395-406 (EPREDREGDDLT). At threonine 406 the chain carries Phosphothreonine. Serine 409 bears the Phosphoserine mark.

Homodimer; disulfide-linked. Interaction with P-, E- and L-selectins, through their lectin/EGF domains, is required for promoting recruitment and rolling of leukocytes. These interactions require sialyl Lewis X glycan modification but there is a differing dependence for tyrosine sulfations. Sulfation on Tyr-51 of PSGL1 is most important for high affinity L-selectin/SELL binding while P-selectin/SELP requires sulfation on Tyr-48. E-selectin/SELE binds with much lower affinity and requires the sLe(x) epitope, but apparently not tyrosine sulfation. Dimerization appears not to be required for P-selectin/SELP binding. Interacts with SNX20. Interacts with MSN and SYK; mediates the activation of SYK by SELPLG. Interacts with HAVCR1. In terms of assembly, (Microbial infection) Interacts with enterovirus 71 capsid proteins. As to quaternary structure, (Microbial infection) Interacts with Staphylococcus aureus proteins SSL5 and SSL11; these interactions prevent SELPLG-mediated neutrophil rolling. Displays complex, core-2, sialylated and fucosylated O-linked oligosaccharides, at least some of which appear to contain poly-N-acetyllactosamine with varying degrees of substitution. Mainly disialylated or neutral forms of the core-2 tetrasaccharide, Galbeta1--&gt;4GlcNAcbeta1--&gt;6(Galbeta1--&gt;3)GalNAcOH. The GlcN:GalN ratio is approximately 2:1 and the Man:Fuc ratio 3:5. Contains about 14% fucose with alpha-1,3 linkage present in two forms: One species is a disialylated, monofucosylated glycan, and the other, a monosialylated, trifucosylated glycan with a polylactosamine backbone. The fucosylated forms carry the Lewis antigen and are important for interaction with selectins and for functioning in leukocyte rolling. The modification containing the sialyl Lewis X glycan is on Thr-57. No sulfated O-glycans. Some N-glycosylation. In terms of processing, sulfation, in conjunction with the SLe(x)-containing glycan, is necessary for P- and L-selectin binding. High affinity P-selectin binding has a preferred requirement for the isomer sulfated on both Tyr-48 and Tyr-51, whereas L-selectin binding requires predominantly sulfation on Tyr-51 with sulfation on Tyr-48 playing only a minor role. These sulfations play an important role in L- and P-selectin-mediated neutrophil recruitment, and leukocyte rolling. Expressed on neutrophils, monocytes and most lymphocytes.

It localises to the membrane. In terms of biological role, a SLe(x)-type proteoglycan, which through high affinity, calcium-dependent interactions with E-, P- and L-selectins, mediates rapid rolling of leukocytes over vascular surfaces during the initial steps in inflammation. Critical for the initial leukocyte capture. (Microbial infection) Acts as a receptor for enterovirus 71. This is P-selectin glycoprotein ligand 1 (SELPLG) from Homo sapiens (Human).